A 187-amino-acid chain; its full sequence is Elongation factor P (187 aa).

This sequence belongs to the elongation factor P family.

The protein resides in the cytoplasm. Its pathway is protein biosynthesis; polypeptide chain elongation. Its function is as follows. Involved in peptide bond synthesis. Stimulates efficient translation and peptide-bond synthesis on native or reconstituted 70S ribosomes in vitro. Probably functions indirectly by altering the affinity of the ribosome for aminoacyl-tRNA, thus increasing their reactivity as acceptors for peptidyl transferase. This is Elongation factor P from Mycobacteroides abscessus (strain ATCC 19977 / DSM 44196 / CCUG 20993 / CIP 104536 / JCM 13569 / NCTC 13031 / TMC 1543 / L948) (Mycobacterium abscessus).